We begin with the raw amino-acid sequence, 80 residues long: Exodeoxyribonuclease 7 small subunit (80 aa).

Belongs to the XseB family. As to quaternary structure, heterooligomer composed of large and small subunits.

The protein resides in the cytoplasm. It catalyses the reaction Exonucleolytic cleavage in either 5'- to 3'- or 3'- to 5'-direction to yield nucleoside 5'-phosphates.. Its function is as follows. Bidirectionally degrades single-stranded DNA into large acid-insoluble oligonucleotides, which are then degraded further into small acid-soluble oligonucleotides. The sequence is that of Exodeoxyribonuclease 7 small subunit from Pseudomonas fluorescens (strain Pf0-1).